Here is a 178-residue protein sequence, read N- to C-terminus: Acireductone dioxygenase (178 aa).

The Fe(2+) site is built by histidine 87, histidine 89, glutamate 93, and histidine 132. Residues histidine 87, histidine 89, glutamate 93, and histidine 132 each coordinate Ni(2+).

This sequence belongs to the acireductone dioxygenase (ARD) family. Fe(2+) is required as a cofactor. It depends on Ni(2+) as a cofactor.

The protein localises to the cytoplasm. Its subcellular location is the nucleus. It carries out the reaction 1,2-dihydroxy-5-(methylsulfanyl)pent-1-en-3-one + O2 = 4-methylsulfanyl-2-oxobutanoate + formate + 2 H(+). The catalysed reaction is 1,2-dihydroxy-5-(methylsulfanyl)pent-1-en-3-one + O2 = 3-(methylsulfanyl)propanoate + CO + formate + 2 H(+). Its pathway is amino-acid biosynthesis; L-methionine biosynthesis via salvage pathway; L-methionine from S-methyl-5-thio-alpha-D-ribose 1-phosphate: step 5/6. Catalyzes 2 different reactions between oxygen and the acireductone 1,2-dihydroxy-3-keto-5-methylthiopentene (DHK-MTPene) depending upon the metal bound in the active site. Fe-containing acireductone dioxygenase (Fe-ARD) produces formate and 2-keto-4-methylthiobutyrate (KMTB), the alpha-ketoacid precursor of methionine in the methionine recycle pathway. Ni-containing acireductone dioxygenase (Ni-ARD) produces methylthiopropionate, carbon monoxide and formate, and does not lie on the methionine recycle pathway. This chain is Acireductone dioxygenase, found in Candida albicans (strain SC5314 / ATCC MYA-2876) (Yeast).